A 408-amino-acid chain; its full sequence is LL-diaminopimelate aminotransferase (408 aa).

Substrate contacts are provided by Tyr15 and Gly42. Pyridoxal 5'-phosphate is bound by residues Tyr72, 108–109 (AK), Tyr132, Asn186, Tyr217, and 245–247 (SFS). The substrate site is built by Lys109, Tyr132, and Asn186. Lys248 is modified (N6-(pyridoxal phosphate)lysine). Arg256 and Asn291 together coordinate pyridoxal 5'-phosphate. The substrate site is built by Asn291 and Arg386.

It belongs to the class-I pyridoxal-phosphate-dependent aminotransferase family. LL-diaminopimelate aminotransferase subfamily. As to quaternary structure, homodimer. Pyridoxal 5'-phosphate serves as cofactor.

The enzyme catalyses (2S,6S)-2,6-diaminopimelate + 2-oxoglutarate = (S)-2,3,4,5-tetrahydrodipicolinate + L-glutamate + H2O + H(+). It functions in the pathway amino-acid biosynthesis; L-lysine biosynthesis via DAP pathway; LL-2,6-diaminopimelate from (S)-tetrahydrodipicolinate (aminotransferase route): step 1/1. Functionally, involved in the synthesis of meso-diaminopimelate (m-DAP or DL-DAP), required for both lysine and peptidoglycan biosynthesis. Catalyzes the direct conversion of tetrahydrodipicolinate to LL-diaminopimelate. The protein is LL-diaminopimelate aminotransferase of Desulfotalea psychrophila (strain LSv54 / DSM 12343).